A 602-amino-acid chain; its full sequence is 4-hydroxy-3-methylbut-2-en-1-yl diphosphate synthase (flavodoxin) (602 aa).

4 residues coordinate [4Fe-4S] cluster: C508, C511, C543, and E550.

Belongs to the IspG family. The cofactor is [4Fe-4S] cluster.

It carries out the reaction (2E)-4-hydroxy-3-methylbut-2-enyl diphosphate + oxidized [flavodoxin] + H2O + 2 H(+) = 2-C-methyl-D-erythritol 2,4-cyclic diphosphate + reduced [flavodoxin]. Its pathway is isoprenoid biosynthesis; isopentenyl diphosphate biosynthesis via DXP pathway; isopentenyl diphosphate from 1-deoxy-D-xylulose 5-phosphate: step 5/6. Functionally, converts 2C-methyl-D-erythritol 2,4-cyclodiphosphate (ME-2,4cPP) into 1-hydroxy-2-methyl-2-(E)-butenyl 4-diphosphate. The chain is 4-hydroxy-3-methylbut-2-en-1-yl diphosphate synthase (flavodoxin) from Chlamydia trachomatis serovar D (strain ATCC VR-885 / DSM 19411 / UW-3/Cx).